We begin with the raw amino-acid sequence, 195 residues long: Pyridoxal 5'-phosphate synthase subunit PdxT (195 aa).

53–55 lines the L-glutamine pocket; sequence GES. The active-site Nucleophile is the Cys82. Residues Arg108 and 134–135 each bind L-glutamine; that span reads IR. Residues His173 and Glu175 each act as charge relay system in the active site.

The protein belongs to the glutaminase PdxT/SNO family. As to quaternary structure, in the presence of PdxS, forms a dodecamer of heterodimers. Only shows activity in the heterodimer.

The enzyme catalyses aldehydo-D-ribose 5-phosphate + D-glyceraldehyde 3-phosphate + L-glutamine = pyridoxal 5'-phosphate + L-glutamate + phosphate + 3 H2O + H(+). It catalyses the reaction L-glutamine + H2O = L-glutamate + NH4(+). Its pathway is cofactor biosynthesis; pyridoxal 5'-phosphate biosynthesis. In terms of biological role, catalyzes the hydrolysis of glutamine to glutamate and ammonia as part of the biosynthesis of pyridoxal 5'-phosphate. The resulting ammonia molecule is channeled to the active site of PdxS. This Methanobrevibacter smithii (strain ATCC 35061 / DSM 861 / OCM 144 / PS) protein is Pyridoxal 5'-phosphate synthase subunit PdxT.